A 1160-amino-acid chain; its full sequence is DNA polymerase III subunit alpha (1160 aa).

It belongs to the DNA polymerase type-C family. DnaE subfamily. In terms of assembly, the DNA polymerase III holoenzyme complex contains at least 10 different subunits organized into 3 functionally essential subassemblies: the Pol III core, the beta sliding clamp processivity factor and the clamp-loading complex. The Pol III core (subunits alpha, epsilon and theta) contains the polymerase and the 3'-5' exonuclease proofreading activities. The polymerase is tethered to the template via the dimeric beta sliding clamp processivity factor. The clamp loader (also called gamma complex) assembles the beta sliding clamp onto the primed template and plays a central role in the organization and communication at the replication fork. The clamp-loading complex contains delta, delta', psi and chi, and 3 copies of either or both of two different DnaX proteins, gamma and tau. The DNA replisome complex has a single clamp loader (3 tau and 1 each of delta, delta', psi and chi subunits) which binds 3 Pol III cores (1 core on the leading strand and 2 on the lagging strand) each with a beta sliding clamp dimer. Additional proteins in the replisome are other copies of gamma, psi and chi, Ssb, DNA helicase and RNA primase. Interacts with the beta sliding-clamp subunit via the peptide Gln-Ala-Asp-Met-Phe (residues 920-924).

Its subcellular location is the cytoplasm. It catalyses the reaction DNA(n) + a 2'-deoxyribonucleoside 5'-triphosphate = DNA(n+1) + diphosphate. In terms of biological role, DNA polymerase III is a complex, multichain enzyme responsible for most of the replicative synthesis in bacteria. This DNA polymerase also exhibits 3' to 5' exonuclease activity. The alpha chain is the DNA polymerase catalytic subunit. It is tethered to replicating DNA by the beta sliding clamp (dnaN), which confers extremely high processivity to the catalytic subunit, copying a 5.4 kb genome in 11 seconds, a speed of at least 500 nucleotides/second at 30 degrees Celsius. This chain is DNA polymerase III subunit alpha (dnaE), found in Escherichia coli (strain K12).